We begin with the raw amino-acid sequence, 511 residues long: Exodeoxyribonuclease 7 large subunit (511 aa).

The protein belongs to the XseA family. Heterooligomer composed of large and small subunits.

Its subcellular location is the cytoplasm. It catalyses the reaction Exonucleolytic cleavage in either 5'- to 3'- or 3'- to 5'-direction to yield nucleoside 5'-phosphates.. In terms of biological role, bidirectionally degrades single-stranded DNA into large acid-insoluble oligonucleotides, which are then degraded further into small acid-soluble oligonucleotides. The polypeptide is Exodeoxyribonuclease 7 large subunit (Brucella melitensis biotype 1 (strain ATCC 23456 / CCUG 17765 / NCTC 10094 / 16M)).